Consider the following 342-residue polypeptide: Holliday junction branch migration complex subunit RuvB (342 aa).

Residues Met-1 to Tyr-181 form a large ATPase domain (RuvB-L) region. ATP-binding positions include Leu-20, Arg-21, Gly-62, Lys-65, Thr-66, Thr-67, Glu-128–Phe-130, Arg-171, Tyr-181, and Arg-218. Thr-66 is a binding site for Mg(2+). The tract at residues Thr-182–Gly-252 is small ATPAse domain (RuvB-S). Residues Ala-255–Asp-342 form a head domain (RuvB-H) region. DNA is bound by residues Arg-310 and Arg-315.

Belongs to the RuvB family. In terms of assembly, homohexamer. Forms an RuvA(8)-RuvB(12)-Holliday junction (HJ) complex. HJ DNA is sandwiched between 2 RuvA tetramers; dsDNA enters through RuvA and exits via RuvB. An RuvB hexamer assembles on each DNA strand where it exits the tetramer. Each RuvB hexamer is contacted by two RuvA subunits (via domain III) on 2 adjacent RuvB subunits; this complex drives branch migration. In the full resolvosome a probable DNA-RuvA(4)-RuvB(12)-RuvC(2) complex forms which resolves the HJ.

It is found in the cytoplasm. The catalysed reaction is ATP + H2O = ADP + phosphate + H(+). Functionally, the RuvA-RuvB-RuvC complex processes Holliday junction (HJ) DNA during genetic recombination and DNA repair, while the RuvA-RuvB complex plays an important role in the rescue of blocked DNA replication forks via replication fork reversal (RFR). RuvA specifically binds to HJ cruciform DNA, conferring on it an open structure. The RuvB hexamer acts as an ATP-dependent pump, pulling dsDNA into and through the RuvAB complex. RuvB forms 2 homohexamers on either side of HJ DNA bound by 1 or 2 RuvA tetramers; 4 subunits per hexamer contact DNA at a time. Coordinated motions by a converter formed by DNA-disengaged RuvB subunits stimulates ATP hydrolysis and nucleotide exchange. Immobilization of the converter enables RuvB to convert the ATP-contained energy into a lever motion, pulling 2 nucleotides of DNA out of the RuvA tetramer per ATP hydrolyzed, thus driving DNA branch migration. The RuvB motors rotate together with the DNA substrate, which together with the progressing nucleotide cycle form the mechanistic basis for DNA recombination by continuous HJ branch migration. Branch migration allows RuvC to scan DNA until it finds its consensus sequence, where it cleaves and resolves cruciform DNA. In Kosmotoga olearia (strain ATCC BAA-1733 / DSM 21960 / TBF 19.5.1), this protein is Holliday junction branch migration complex subunit RuvB.